A 555-amino-acid chain; its full sequence is ATP-dependent RNA helicase MRH4, mitochondrial (555 aa).

The N-terminal 25 residues, 1-25 (MFKLLIPNKYNYVIRPLVRFKSIKS), are a transit peptide targeting the mitochondrion. Residues 101–108 (DIKPTPVQ) carry the Q motif motif. The Helicase ATP-binding domain occupies 144–361 (ANEIQKTKVF…SKLFPDQRSL (218 aa)). 157–164 (AETGSGKT) is an ATP binding site. A DEAD box motif is present at residues 309-312 (DEAD). The Helicase C-terminal domain occupies 395 to 555 (CLAQALYAIS…NAIIRGLRIG (161 aa)).

This sequence belongs to the DEAD box helicase family. MRH4 subfamily.

The protein localises to the mitochondrion. It catalyses the reaction ATP + H2O = ADP + phosphate + H(+). Functionally, ATP-binding RNA helicase involved in mitochondrial RNA metabolism. Required for maintenance of mitochondrial DNA. The protein is ATP-dependent RNA helicase MRH4, mitochondrial (MRH4) of Candida albicans (strain SC5314 / ATCC MYA-2876) (Yeast).